A 1137-amino-acid polypeptide reads, in one-letter code: Voltage-dependent calcium channel subunit alpha-2/delta-4 (1137 aa).

Residues 1 to 19 (MVCGCSALLPLPNPRPTMP) form the signal peptide. At 20–1115 (ATPNFLANPS…AQDCGGASDT (1096 aa)) the chain is on the extracellular side. Residue asparagine 201 is glycosylated (N-linked (GlcNAc...) asparagine). The VWFA domain maps to 291-473 (DIVILVDVSG…ENVMEYLHVL (183 aa)). Aspartate 297, serine 299, and serine 301 together coordinate a divalent metal cation. Positions 297 to 301 (DVSGS) match the MIDAS-like motif motif. Cysteine 447 and cysteine 1097 form a disulfide bridge. The region spanning 487–580 (WTEAYMDSKL…RPLYREGKKL (94 aa)) is the Cache domain. Asparagine 664 carries an N-linked (GlcNAc...) asparagine glycan. The chain crosses the membrane as a helical span at residues 1116–1136 (SASPPLLLLPVCAWGLLPQLL). Arginine 1137 is a topological domain (cytoplasmic).

Belongs to the calcium channel subunit alpha-2/delta family. In terms of assembly, dimer formed of alpha-2-2 and delta-2 chains; disulfide-linked. Voltage-dependent calcium channels are multisubunit complexes, consisting of alpha-1 (CACNA1), alpha-2 (CACNA2D), beta (CACNB) and delta (CACNA2D) subunits in a 1:1:1:1 ratio. Interacts with CACNA1C and CACNB3. Post-translationally, may be proteolytically processed into subunits alpha-2-4 and delta-4 that are disulfide-linked. It is however unclear whether such cleavage really takes place in vivo and has a functional role. As to expression, predominantly expressed in certain types of endocrine cells. Present in the Paneth cells of the small intestine. Also present in the erythroblasts in the fetal liver, in the cells of the zona reticularis of the adrenal gland and in the basophils of the pituitary. Present at low level in some brain regions such as the cerebellum (at protein level).

It localises to the membrane. The alpha-2/delta subunit of voltage-dependent calcium channels regulates calcium current density and activation/inactivation kinetics of the calcium channel. The polypeptide is Voltage-dependent calcium channel subunit alpha-2/delta-4 (CACNA2D4) (Homo sapiens (Human)).